Here is a 1165-residue protein sequence, read N- to C-terminus: Valine--tRNA ligase (1165 aa).

The short motif at 43-53 (PNVTGSLHMGH) is the 'HIGH' region element. A 'KMSKS' region motif is present at residues 800–804 (KMSKT). ATP is bound at residue Lys803. Coiled coils occupy residues 1001–1032 (KNED…SDLQ) and 1097–1165 (HVDL…VLRS).

The protein belongs to the class-I aminoacyl-tRNA synthetase family. ValS type 1 subfamily. In terms of assembly, monomer.

The protein localises to the cytoplasm. The enzyme catalyses tRNA(Val) + L-valine + ATP = L-valyl-tRNA(Val) + AMP + diphosphate. In terms of biological role, catalyzes the attachment of valine to tRNA(Val). As ValRS can inadvertently accommodate and process structurally similar amino acids such as threonine, to avoid such errors, it has a 'posttransfer' editing activity that hydrolyzes mischarged Thr-tRNA(Val) in a tRNA-dependent manner. The polypeptide is Valine--tRNA ligase (Aquifex aeolicus (strain VF5)).